A 120-amino-acid chain; its full sequence is MRLPAQLLGLLMLWVPGSSAEIVMTQTPLSLSITPGEQASMSCRSSQSLLHSDGYTYLYWFLQKARPVSTLLIYEVSNRFSGVPDRFSGSGSGTDFTLKISRVEAEDFGVYYCMQDAQDP.

Positions methionine 1–alanine 20 are cleaved as a signal peptide. The interval glutamate 21–cysteine 43 is framework-1. Positions glutamate 21 to proline 120 constitute an Ig-like domain. The cysteines at positions 43 and 113 are disulfide-linked. Positions arginine 44–tyrosine 59 are complementarity-determining-1. The segment at tryptophan 60–tyrosine 74 is framework-2. The tract at residues glutamate 75–serine 81 is complementarity-determining-2. Residues glycine 82–cysteine 113 are framework-3. A complementarity-determining-3 region spans residues methionine 114–proline 120.

As to quaternary structure, immunoglobulins are composed of two identical heavy chains and two identical light chains; disulfide-linked.

Its subcellular location is the secreted. It is found in the cell membrane. In terms of biological role, v region of the variable domain of immunoglobulin light chains that participates in the antigen recognition. Immunoglobulins, also known as antibodies, are membrane-bound or secreted glycoproteins produced by B lymphocytes. In the recognition phase of humoral immunity, the membrane-bound immunoglobulins serve as receptors which, upon binding of a specific antigen, trigger the clonal expansion and differentiation of B lymphocytes into immunoglobulins-secreting plasma cells. Secreted immunoglobulins mediate the effector phase of humoral immunity, which results in the elimination of bound antigens. The antigen binding site is formed by the variable domain of one heavy chain, together with that of its associated light chain. Thus, each immunoglobulin has two antigen binding sites with remarkable affinity for a particular antigen. The variable domains are assembled by a process called V-(D)-J rearrangement and can then be subjected to somatic hypermutations which, after exposure to antigen and selection, allow affinity maturation for a particular antigen. In Homo sapiens (Human), this protein is Immunoglobulin kappa variable 2D-26.